A 334-amino-acid polypeptide reads, in one-letter code: DNA-directed RNA polymerase subunit alpha (334 aa).

The tract at residues 1-231 (MQSNTFLTPR…EQLSVFADLK (231 aa)) is alpha N-terminal domain (alpha-NTD). The interval 245–334 (IDPVLLRPVD…GKKDTSHAAP (90 aa)) is alpha C-terminal domain (alpha-CTD).

It belongs to the RNA polymerase alpha chain family. In terms of assembly, homodimer. The RNAP catalytic core consists of 2 alpha, 1 beta, 1 beta' and 1 omega subunit. When a sigma factor is associated with the core the holoenzyme is formed, which can initiate transcription.

It carries out the reaction RNA(n) + a ribonucleoside 5'-triphosphate = RNA(n+1) + diphosphate. Functionally, DNA-dependent RNA polymerase catalyzes the transcription of DNA into RNA using the four ribonucleoside triphosphates as substrates. The polypeptide is DNA-directed RNA polymerase subunit alpha (Nitrosospira multiformis (strain ATCC 25196 / NCIMB 11849 / C 71)).